The primary structure comprises 1691 residues: Non-structural polyprotein pORF1 (1691 aa).

The 185-residue stretch at 56 to 240 (VFRPEVFWNH…HDVATLRTWI (185 aa)) folds into the Alphavirus-like MT domain. The interval 60–240 (EVFWNHPIQR…HDVATLRTWI (181 aa)) is methyltransferase. The interval 241–439 (RTTKVVGEHP…FYAQCRRWLS (199 aa)) is Y-domain. Cysteines 434 and 481 form a disulfide. The tract at residues 442-509 (FHLDPRTLVF…EAYEGSDVDT (68 aa)) is putative protease. Residues 510-691 (AEPATLDITG…FSPGHEWRSA (182 aa)) are zinc-binding. Zn(2+) contacts are provided by histidine 671, glutamate 673, and histidine 686. The tract at residues 710-776 (DTPLTVGLIS…GPNPNGVPQR (67 aa)) is hinge. The disordered stretch occupies residues 722–778 (LDAAPHSGGPPATATGPAVGSSDSPDPDPLPDVTDGSRPSGARPAGPNPNGVPQRRL). Positions 773-919 (VPQRRLLHTY…LYLTELAARW (147 aa)) constitute a Macro domain. Residues 783-940 (PDGAKIYVGS…NITEDTARAA (158 aa)) are X-domain. The (+)RNA virus helicase ATP-binding domain occupies 932 to 1080 (ITEDTARAAN…RPELVPTSWW (149 aa)). The segment at 958–1202 (GCKVEPGVVR…ISDAIVNNFF (245 aa)) is NTPase/helicase. 973-980 (GVPGSGKS) contributes to the ATP binding site. Residues 1081–1214 (HVTHRCPADV…GGEVGHQRPS (134 aa)) enclose the (+)RNA virus helicase C-terminal domain. Residues 1205-1691 (GGEVGHQRPS…LTHSIMHRSE (487 aa)) form an RNA-directed RNA polymerase region. One can recognise a RdRp catalytic domain in the interval 1452 to 1563 (AMVFENDFSE…LCSEYRQSPG (112 aa)).

The protein belongs to the hepevirus non-structural polyprotein family. The protease domain interacts with host EIF2AK4 (via C-terminus); this interaction inhibits dimerization of EIF2AK4 and prevents EIF2AK4-mediated phosphorylation of host EIF2A. Requires Mg(2+) as cofactor. In terms of processing, ORF1 polyprotein does not seem to be processed into distinct enzymatic domains by a viral protease belonging to ORF1, but could be processed by a host serine protease like thrombin.

The protein localises to the host cytoplasm. Its subcellular location is the host perinuclear region. The enzyme catalyses RNA(n) + a ribonucleoside 5'-triphosphate = RNA(n+1) + diphosphate. It carries out the reaction GTP + S-adenosyl-L-methionine = N(7)-methyl-GTP + S-adenosyl-L-homocysteine. Putative protease: Inhibited by chymostatin. In terms of biological role, methyltransferase: Displays a capping enzyme activity. This function is necessary since all viral RNAs are synthesized in the cytoplasm, and host capping enzymes are restricted to the nucleus. The enzymatic reaction involves a covalent link between 7-methyl-GMP and the methyltransferase, whereas eukaryotic capping enzymes form a covalent complex only with GMP. Methyltransferase catalyzes transfer of a methyl group from S-adenosylmethionine to GTP and GDP to yield m(7)GTP or m(7)GDP. GDP is a better substrate than GTP. This enzyme also displays guanylyltransferase activity to form a covalent complex, methyltransferase-m(7)GMP, from which 7-methyl-GMP is transferred to the mRNA to create the cap structure. Y-domain: Indispensable for virus replication. Its function is as follows. Putative protease: The putative protease domain although necessary for replication of the virus may not be a protease but rather a structural Zn(2+)-binding domain. Inhibits induction of IFN-beta by MDA5 and RIG-I pathways and down-regulates the expression of MDA5. Functionally, NTPase/helicase: Multi-functional protein that exhibits NTPase and RNA unwinding activities. Hydrolyzes all NTPs efficiently and unwinds RNA duplexes containing 5' overhangs. Possesses a sequence independent RNA-5'-triphosphatase (RTPase) activity suggestive of its role in forming viral cap structure. Also participates in viral genome replication, RNA translocation and genome packaging/unpackaging. In terms of biological role, RNA-directed RNA polymerase: Plays an essential role in the virus replication. Binds to the 3'-end of the genomic RNA to initiate viral replication. In Bandicota bengalensis (lesser bandicoot rat), this protein is Non-structural polyprotein pORF1.